Here is a 1091-residue protein sequence, read N- to C-terminus: DNA mismatch repair protein Msh3 (1091 aa).

Composition is skewed to low complexity over residues 1-15 (MPRG…TAAG) and 24-40 (LSRF…SASS). Positions 1–84 (MPRGKSASGG…EENISVASHH (84 aa)) are disordered. Ser33 carries the phosphoserine modification. Residues 43–54 (PAEKVTEGDSRK) show a composition bias toward basic and acidic residues. Residue 850 to 857 (GPNMGGKS) coordinates ATP.

The protein belongs to the DNA mismatch repair MutS family. MSH3 subfamily. Component of the DNA mismatch repair (MMR) complex composed at least of MSH2, MSH3, MSH6, PMS1 and MLH1. Heterodimer consisting of MSH2-MSH3 (MutS beta). Forms a ternary complex with MutL alpha (MLH1-PMS1). Interacts with EXO1. Interacts with MCM9.

Component of the post-replicative DNA mismatch repair system (MMR). Heterodimerizes with MSH2 to form MutS beta which binds to DNA mismatches thereby initiating DNA repair. When bound, the MutS beta heterodimer bends the DNA helix and shields approximately 20 base pairs. MutS beta recognizes large insertion-deletion loops (IDL) up to 13 nucleotides long. After mismatch binding, forms a ternary complex with the MutL alpha heterodimer, which is thought to be responsible for directing the downstream MMR events, including strand discrimination, excision, and resynthesis. This chain is DNA mismatch repair protein Msh3 (Msh3), found in Mus musculus (Mouse).